A 90-amino-acid chain; its full sequence is Small ribosomal subunit protein uS15 (90 aa).

Belongs to the universal ribosomal protein uS15 family. Part of the 30S ribosomal subunit. Forms a bridge to the 50S subunit in the 70S ribosome, contacting the 23S rRNA.

Its function is as follows. One of the primary rRNA binding proteins, it binds directly to 16S rRNA where it helps nucleate assembly of the platform of the 30S subunit by binding and bridging several RNA helices of the 16S rRNA. Functionally, forms an intersubunit bridge (bridge B4) with the 23S rRNA of the 50S subunit in the ribosome. The sequence is that of Small ribosomal subunit protein uS15 from Campylobacter hominis (strain ATCC BAA-381 / DSM 21671 / CCUG 45161 / LMG 19568 / NCTC 13146 / CH001A).